The following is a 491-amino-acid chain: Chromosomal replication initiator protein DnaA (491 aa).

The interval 1–69 (MTTWDKCLKK…TIQECHGNDL (69 aa)) is domain I, interacts with DnaA modulators. The segment at 69–154 (LIIEYSNKKF…KEDEEYSFGL (86 aa)) is domain II. The domain III, AAA+ region stretch occupies residues 155–371 (PLKEKYVFDS…GALNRVLTTS (217 aa)). Residues G199, G201, K202, and T203 each coordinate ATP. The tract at residues 372-491 (KFNHKDPTIE…YELLLNKISR (120 aa)) is domain IV, binds dsDNA.

It belongs to the DnaA family. As to quaternary structure, oligomerizes as a right-handed, spiral filament on DNA at oriC.

The protein localises to the cytoplasm. Functionally, plays an essential role in the initiation and regulation of chromosomal replication. ATP-DnaA binds to the origin of replication (oriC) to initiate formation of the DNA replication initiation complex once per cell cycle. Binds the DnaA box (a 9 base pair repeat at the origin) and separates the double-stranded (ds)DNA. Forms a right-handed helical filament on oriC DNA; dsDNA binds to the exterior of the filament while single-stranded (ss)DNA is stabiized in the filament's interior. The ATP-DnaA-oriC complex binds and stabilizes one strand of the AT-rich DNA unwinding element (DUE), permitting loading of DNA polymerase. After initiation quickly degrades to an ADP-DnaA complex that is not apt for DNA replication. Binds acidic phospholipids. The sequence is that of Chromosomal replication initiator protein DnaA from Francisella tularensis subsp. tularensis (strain WY96-3418).